A 98-amino-acid chain; its full sequence is Small ribosomal subunit protein eS24 (98 aa).

Belongs to the eukaryotic ribosomal protein eS24 family. Part of the 30S ribosomal subunit.

In Thermococcus kodakarensis (strain ATCC BAA-918 / JCM 12380 / KOD1) (Pyrococcus kodakaraensis (strain KOD1)), this protein is Small ribosomal subunit protein eS24.